We begin with the raw amino-acid sequence, 234 residues long: Melanoregulin (234 aa).

Residues 215–234 (MNQNISGGEDEDEDESEPDD) are disordered. The segment covering 222–234 (GEDEDEDESEPDD) has biased composition (acidic residues).

Belongs to the melanoregulin family.

Its subcellular location is the apical cell membrane. The protein localises to the melanosome membrane. It is found in the lysosome membrane. It localises to the cytoplasmic vesicle membrane. Probably functions as a cargo-recognition protein that couples cytoplasmic vesicles to the transport machinery. Contributes to retrograde melanosome transport from the cell periphery to the center. Overexpression causes accumulation of late endosomes and/or lysosomes at the microtubule organising center (MTOC) at the center of the cell. Probably binds cholesterol and requires the presence of cholesterol in membranes to function in microtubule-mediated retrograde organelle transport. Binds phosphatidylinositol 3-phosphate, phosphatidylinositol 4-phosphate, phosphatidylinositol 5-phosphate and phosphatidylinositol 3,5-bisphosphate. The polypeptide is Melanoregulin (mreg) (Danio rerio (Zebrafish)).